The following is a 290-amino-acid chain: Diaminopimelate epimerase (290 aa).

Residues asparagine 17, glutamine 49, and asparagine 69 each contribute to the substrate site. The active-site Proton donor is the cysteine 78. Substrate contacts are provided by residues 79-80 (GN), asparagine 166, asparagine 199, and 217-218 (ER). The active-site Proton acceptor is cysteine 226. 227-228 (GS) contributes to the substrate binding site.

This sequence belongs to the diaminopimelate epimerase family. In terms of assembly, homodimer.

Its subcellular location is the cytoplasm. The catalysed reaction is (2S,6S)-2,6-diaminopimelate = meso-2,6-diaminopimelate. It participates in amino-acid biosynthesis; L-lysine biosynthesis via DAP pathway; DL-2,6-diaminopimelate from LL-2,6-diaminopimelate: step 1/1. In terms of biological role, catalyzes the stereoinversion of LL-2,6-diaminopimelate (L,L-DAP) to meso-diaminopimelate (meso-DAP), a precursor of L-lysine and an essential component of the bacterial peptidoglycan. The protein is Diaminopimelate epimerase of Nitrobacter hamburgensis (strain DSM 10229 / NCIMB 13809 / X14).